The chain runs to 127 residues: Protein B20 (127 aa).

Residues 86–127 (DRTGMNSESDSESDNISIKTEYENEYEFYDETQDQSTQHNDL) are disordered. Residues 108–118 (ENEYEFYDETQ) are compositionally biased toward acidic residues.

This Homo sapiens (Human) protein is Protein B20.